We begin with the raw amino-acid sequence, 58 residues long: Single-pass membrane and coiled-coil domain-containing protein 4 homolog (58 aa).

Residues Met1–Thr31 are a coiled coil. The chain crosses the membrane as a helical span at residues Thr31–Lys51.

This sequence belongs to the SMCO4 family.

It is found in the membrane. The sequence is that of Single-pass membrane and coiled-coil domain-containing protein 4 homolog from Drosophila melanogaster (Fruit fly).